Reading from the N-terminus, the 261-residue chain is 5'-nucleotidase SurE (261 aa).

Positions 8, 9, 43, and 96 each coordinate a divalent metal cation.

Belongs to the SurE nucleotidase family. Requires a divalent metal cation as cofactor.

The protein localises to the cytoplasm. The enzyme catalyses a ribonucleoside 5'-phosphate + H2O = a ribonucleoside + phosphate. In terms of biological role, nucleotidase that shows phosphatase activity on nucleoside 5'-monophosphates. This chain is 5'-nucleotidase SurE, found in Cereibacter sphaeroides (strain ATCC 17023 / DSM 158 / JCM 6121 / CCUG 31486 / LMG 2827 / NBRC 12203 / NCIMB 8253 / ATH 2.4.1.) (Rhodobacter sphaeroides).